We begin with the raw amino-acid sequence, 152 residues long: Large ribosomal subunit protein bL21 (152 aa).

Positions 115–152 (VTSISNGEKPKKATTSAKPNTKKPSTAVKSSKVEKTPE) are disordered. Residues 127–143 (ATTSAKPNTKKPSTAVK) show a composition bias toward polar residues.

Belongs to the bacterial ribosomal protein bL21 family. Part of the 50S ribosomal subunit. Contacts protein L20.

This protein binds to 23S rRNA in the presence of protein L20. The chain is Large ribosomal subunit protein bL21 from Prochlorococcus marinus (strain SARG / CCMP1375 / SS120).